The sequence spans 210 residues: High-affinity nitrate transporter 3.1 (210 aa).

The signal sequence occupies residues 1–22; sequence MAIQKILFASLLICSLIQSIHG. A helical membrane pass occupies residues 178–198; it reads LDIASICFSVFSVVALVVFFV.

This sequence belongs to the NAR2 family. Heterotetramer composed of two NRT2.1 and two NRT3.1. Interacts with NRT2.1 and NRT2.3. Interacts with all other NRT2 transporters, including NRT2.5. As to expression, highly expressed in roots. Detected in shoots.

It is found in the cell membrane. Acts as a dual component transporter with NTR2.1. Required for high-affinity nitrate transport. Acts as a repressor of lateral root initiation. May be involved in targeting NRT2 proteins to the plasma membrane. This Arabidopsis thaliana (Mouse-ear cress) protein is High-affinity nitrate transporter 3.1 (NRT3.1).